Here is a 150-residue protein sequence, read N- to C-terminus: Large-conductance mechanosensitive channel (150 aa).

2 consecutive transmembrane segments (helical) span residues 14 to 34 (VIDL…VTSL) and 81 to 101 (GLFI…FIVI).

Belongs to the MscL family. As to quaternary structure, homopentamer.

It is found in the cell membrane. In terms of biological role, channel that opens in response to stretch forces in the membrane lipid bilayer. May participate in the regulation of osmotic pressure changes within the cell. The chain is Large-conductance mechanosensitive channel from Desulfitobacterium hafniense (strain DSM 10664 / DCB-2).